We begin with the raw amino-acid sequence, 151 residues long: Cytochrome c-type biogenesis protein CcmE (151 aa).

Residues 1-9 are Cytoplasmic-facing; it reads MKGLKKKRR. The helical; Signal-anchor for type II membrane protein transmembrane segment at 10-30 threads the bilayer; the sequence is IQIIALAFVALAGSTALIGYA. The Periplasmic segment spans residues 31-151; it reads MRDGINFFRS…FQHTEDQPQG (121 aa). Residues H123 and Y127 each contribute to the heme site.

It belongs to the CcmE/CycJ family.

The protein localises to the cell inner membrane. Its function is as follows. Heme chaperone required for the biogenesis of c-type cytochromes. Transiently binds heme delivered by CcmC and transfers the heme to apo-cytochromes in a process facilitated by CcmF and CcmH. In Cereibacter sphaeroides (strain ATCC 17029 / ATH 2.4.9) (Rhodobacter sphaeroides), this protein is Cytochrome c-type biogenesis protein CcmE.